Consider the following 288-residue polypeptide: Probable anion import ATP-binding protein HVO_1886 (288 aa).

The segment covering 1-18 has biased composition (basic and acidic residues); it reads MTTERPDAGDSGSEKPDE. The interval 1–33 is disordered; it reads MTTERPDAGDSGSEKPDETAAPDPAANGARRSK. An ABC transporter domain is found at 36 to 282; it reads LAARSLGHGF…PDDDRVRQFV (247 aa). ATP is bound at residue 68–75; sequence GPSGTGKT.

Belongs to the ABC transporter superfamily. In terms of assembly, the complex is composed of two ATP-binding proteins (HVO_1886), two transmembrane proteins (HVO_1887) and a solute-binding protein (HVO_1888).

The protein resides in the cell membrane. Its function is as follows. Part of an ABC transporter complex involved in anions import. Responsible for energy coupling to the transport system. The chain is Probable anion import ATP-binding protein HVO_1886 from Haloferax volcanii (strain ATCC 29605 / DSM 3757 / JCM 8879 / NBRC 14742 / NCIMB 2012 / VKM B-1768 / DS2) (Halobacterium volcanii).